The sequence spans 110 residues: U1-lycotoxin-Ls1dd (110 aa).

A signal peptide spans 1–20 (MKFVLLFGVLLVTLFSYSSA). A propeptide spanning residues 21 to 44 (EMLDDFDQADEDELLSLIEKEEAR) is cleaved from the precursor. Disulfide bonds link C47-C62, C54-C71, C61-C89, and C73-C87.

This sequence belongs to the neurotoxin 19 (CSTX) family. 03 subfamily. In terms of tissue distribution, expressed by the venom gland.

The protein resides in the secreted. This chain is U1-lycotoxin-Ls1dd, found in Lycosa singoriensis (Wolf spider).